The chain runs to 226 residues: Phosphatidylserine decarboxylase proenzyme (226 aa).

Catalysis depends on Ser184, which acts as the Schiff-base intermediate with substrate; via pyruvic acid. Pyruvic acid (Ser); by autocatalysis is present on Ser184.

It belongs to the phosphatidylserine decarboxylase family. PSD-A subfamily. Heterodimer of a large membrane-associated beta subunit and a small pyruvoyl-containing alpha subunit. Pyruvate is required as a cofactor. Post-translationally, is synthesized initially as an inactive proenzyme. Formation of the active enzyme involves a self-maturation process in which the active site pyruvoyl group is generated from an internal serine residue via an autocatalytic post-translational modification. Two non-identical subunits are generated from the proenzyme in this reaction, and the pyruvate is formed at the N-terminus of the alpha chain, which is derived from the carboxyl end of the proenzyme. The post-translation cleavage follows an unusual pathway, termed non-hydrolytic serinolysis, in which the side chain hydroxyl group of the serine supplies its oxygen atom to form the C-terminus of the beta chain, while the remainder of the serine residue undergoes an oxidative deamination to produce ammonia and the pyruvoyl prosthetic group on the alpha chain.

The protein resides in the cell membrane. The enzyme catalyses a 1,2-diacyl-sn-glycero-3-phospho-L-serine + H(+) = a 1,2-diacyl-sn-glycero-3-phosphoethanolamine + CO2. It participates in phospholipid metabolism; phosphatidylethanolamine biosynthesis; phosphatidylethanolamine from CDP-diacylglycerol: step 2/2. In terms of biological role, catalyzes the formation of phosphatidylethanolamine (PtdEtn) from phosphatidylserine (PtdSer). This chain is Phosphatidylserine decarboxylase proenzyme, found in Ehrlichia chaffeensis (strain ATCC CRL-10679 / Arkansas).